Here is a 196-residue protein sequence, read N- to C-terminus: Elongation factor Ts (196 aa).

The tract at residues T80–V83 is involved in Mg(2+) ion dislocation from EF-Tu.

This sequence belongs to the EF-Ts family. Heterotetramer composed of two EF-Ts.EF-Tu dimer complexes.

Its subcellular location is the cytoplasm. In terms of biological role, associates with the EF-Tu.GDP complex and induces the exchange of GDP to GTP. It remains bound to the aminoacyl-tRNA.EF-Tu.GTP complex up to the GTP hydrolysis stage on the ribosome. This is Elongation factor Ts (tsf) from Thermus thermophilus (strain ATCC 27634 / DSM 579 / HB8).